A 162-amino-acid chain; its full sequence is UPF0114 protein Psyr_4257 (162 aa).

4 helical membrane passes run 15 to 35, 53 to 73, 109 to 129, and 136 to 156; these read LLAP…LKFF, LILV…LVMV, VAAS…MDAT, and LMWY…MGYL.

This sequence belongs to the UPF0114 family.

Its subcellular location is the cell membrane. This Pseudomonas syringae pv. syringae (strain B728a) protein is UPF0114 protein Psyr_4257.